Reading from the N-terminus, the 189-residue chain is 3-isopropylmalate dehydratase small subunit (189 aa).

The protein belongs to the LeuD family. LeuD type 1 subfamily. Heterodimer of LeuC and LeuD.

It catalyses the reaction (2R,3S)-3-isopropylmalate = (2S)-2-isopropylmalate. It participates in amino-acid biosynthesis; L-leucine biosynthesis; L-leucine from 3-methyl-2-oxobutanoate: step 2/4. Its function is as follows. Catalyzes the isomerization between 2-isopropylmalate and 3-isopropylmalate, via the formation of 2-isopropylmaleate. The sequence is that of 3-isopropylmalate dehydratase small subunit from Staphylococcus epidermidis (strain ATCC 35984 / DSM 28319 / BCRC 17069 / CCUG 31568 / BM 3577 / RP62A).